A 777-amino-acid polypeptide reads, in one-letter code: Protein argonaute (777 aa).

The tract at residues 1–107 (MAPVQAADEM…ARLDDALEEA (107 aa)) is N-terminal domain. The segment at 108–182 (LPKYAAVKKR…TIGMRYDIEA (75 aa)) is linker L1. The interval 183 to 243 (SLRDLLEAGI…VNVNDAKLEG (61 aa)) is PAZ domain. A linker L2 region spans residues 244 to 341 (SKENFTRCLS…DRTGAKSAEY (98 aa)). The tract at residues 342–509 (AWRGLSQFGP…SIATYAKLNG (168 aa)) is mid domain. The region spanning 445 to 757 (GIVVLFEDHA…IAELLGRLKS (313 aa)) is the Piwi domain. Residues 510–777 (TPWTVNHDKA…IKLKWSRWFL (268 aa)) are PIWI domain. Mg(2+) is bound at residue Leu777.

The protein belongs to the argonaute family. Long pAgo subfamily. The cofactor is Mg(2+).

Its function is as follows. A catalytically inactive argonaute protein. Binds 5'-phosphorylated RNA as the guide (gRNA) and short DNA as target DNA (tDNA); does not bind other nucleic acid combinations, does not bind tDNA alone. Has highest affinity for gRNA that begins with 5'-phospho-U and poor affinity for gRNA with 5'-OH. Upon expression in E.coli, plasmid sequences are found in RsAgo, its induction leads to plasmid degradation and suppression of genes encoded on foreign plasmids, suggesting it may also interfere with transcription. Does not interact with preformed gRNA:tDNA duplexes. Mismatches and nt bulges are tolerated in the ternary complex, however, they significantly reduce the affinity of RsAgo:gRNA for tDNA. Mismatched tDNA can cause dissociation of gRNA from RsAgo. In situ binds 2 populations of RNA (15-19 and 45 nucleotides, nt) and a population of ssDNA 22-24 nt in length. The small sense RNA is probably derived from mRNA degradation and strongly enriched for U in the first and U/C in the second positions. The small DNA is enriched for sequences complementary to the RNA, with 3 nt overhangs on both ends; another nuclease may trim the ends. The sequences are largely derived from exogenous plasmids or genome-encoded foreign elements such as prophages and transposons. Forms a ternary complex with gRNA and double-stranded tDNA only when the tDNA is open. The polypeptide is Protein argonaute (Cereibacter sphaeroides (strain ATCC 17025 / ATH 2.4.3) (Rhodobacter sphaeroides)).